A 137-amino-acid chain; its full sequence is Cytochrome b5 (137 aa).

In terms of domain architecture, Cytochrome b5 heme-binding spans 6–82 (KKVYTLEEVA…MDEYYVGDID (77 aa)). Heme is bound by residues H41 and H65. A helical transmembrane segment spans residues 108 to 128 (FIIKILQFLVPLAILGLAVAI).

It belongs to the cytochrome b5 family.

It is found in the endoplasmic reticulum membrane. The protein resides in the microsome membrane. In terms of biological role, membrane bound hemoprotein which function as an electron carrier for several membrane bound oxygenases. This is Cytochrome b5 from Oryza sativa subsp. japonica (Rice).